We begin with the raw amino-acid sequence, 146 residues long: Large ribosomal subunit protein uL15 (146 aa).

Basic and acidic residues predominate over residues 1–18 (MKLHELKAAEGTRKERNR). The disordered stretch occupies residues 1–58 (MKLHELKAAEGTRKERNRVGRGMSSGNGKTSGRGHKGQKARSGGGVRPGFEGGQMPLF). Gly residues predominate over residues 42–52 (SGGGVRPGFEG).

It belongs to the universal ribosomal protein uL15 family. In terms of assembly, part of the 50S ribosomal subunit.

In terms of biological role, binds to the 23S rRNA. The polypeptide is Large ribosomal subunit protein uL15 (Oceanobacillus iheyensis (strain DSM 14371 / CIP 107618 / JCM 11309 / KCTC 3954 / HTE831)).